Consider the following 242-residue polypeptide: 7-cyano-7-deazaguanine synthase (242 aa).

ATP is bound at residue F12–L22. Zn(2+) contacts are provided by C200, C215, C218, and C221.

It belongs to the QueC family. It depends on Zn(2+) as a cofactor.

It catalyses the reaction 7-carboxy-7-deazaguanine + NH4(+) + ATP = 7-cyano-7-deazaguanine + ADP + phosphate + H2O + H(+). The protein operates within purine metabolism; 7-cyano-7-deazaguanine biosynthesis. Functionally, catalyzes the ATP-dependent conversion of 7-carboxy-7-deazaguanine (CDG) to 7-cyano-7-deazaguanine (preQ(0)). This Gluconobacter oxydans (strain 621H) (Gluconobacter suboxydans) protein is 7-cyano-7-deazaguanine synthase.